The chain runs to 397 residues: Phosphoglycerate kinase (397 aa).

Substrate is bound by residues 21-23, Arg36, 59-62, Arg119, and Arg156; these read DFN and HLGR. ATP contacts are provided by residues Lys207, Gly295, Glu326, and 353–356; that span reads GGDS.

The protein belongs to the phosphoglycerate kinase family. In terms of assembly, monomer.

The protein resides in the cytoplasm. The catalysed reaction is (2R)-3-phosphoglycerate + ATP = (2R)-3-phospho-glyceroyl phosphate + ADP. It participates in carbohydrate degradation; glycolysis; pyruvate from D-glyceraldehyde 3-phosphate: step 2/5. This chain is Phosphoglycerate kinase, found in Enterococcus faecalis (strain ATCC 700802 / V583).